The chain runs to 1177 residues: uncharacterized protein (1177 aa).

Residues 1–26 (MKKLLKKSKFWWFLLCGLSVSTILVA) form the signal peptide. Cys-27 is lipidated: N-palmitoyl cysteine. A lipid anchor (S-diacylglycerol cysteine) is attached at Cys-27.

This sequence belongs to the MG307/MG309/MG338 family.

Its subcellular location is the cell membrane. This is an uncharacterized protein from Mycoplasma genitalium (strain ATCC 33530 / DSM 19775 / NCTC 10195 / G37) (Mycoplasmoides genitalium).